The chain runs to 178 residues: Fluoride-specific ion channel FluC 2 (178 aa).

4 consecutive transmembrane segments (helical) span residues 25 to 45, 63 to 83, 97 to 117, and 129 to 149; these read PDIH…GTAI, FVAN…LAGA, GLGM…LEGF, and IAYL…GVWA. Residues glycine 104 and serine 107 each contribute to the Na(+) site.

It belongs to the fluoride channel Fluc/FEX (TC 1.A.43) family.

It is found in the cell membrane. It carries out the reaction fluoride(in) = fluoride(out). Na(+) is not transported, but it plays an essential structural role and its presence is essential for fluoride channel function. Fluoride-specific ion channel. Important for reducing fluoride concentration in the cell, thus reducing its toxicity. The sequence is that of Fluoride-specific ion channel FluC 2 from Bifidobacterium longum (strain NCC 2705).